The sequence spans 122 residues: Large ribosomal subunit protein uL14 (122 aa).

This sequence belongs to the universal ribosomal protein uL14 family. As to quaternary structure, part of the 50S ribosomal subunit. Forms a cluster with proteins L3 and L19. In the 70S ribosome, L14 and L19 interact and together make contacts with the 16S rRNA in bridges B5 and B8.

In terms of biological role, binds to 23S rRNA. Forms part of two intersubunit bridges in the 70S ribosome. The chain is Large ribosomal subunit protein uL14 from Thermosipho melanesiensis (strain DSM 12029 / CIP 104789 / BI429).